Consider the following 235-residue polypeptide: Zorya protein ZorB (235 aa).

A helical transmembrane segment spans residues 25 to 44; sequence LMAGLMMVFMFISIAYMHYV. Residues 87–225 form the OmpA-like domain; the sequence is QTLEVRFKSP…RVTFKVVTNA (139 aa).

This sequence belongs to the MotB family.

The protein resides in the cell inner membrane. Component of antiviral defense system Zorya type II, composed of ZorA, ZorB and ZorE. Expression of Zorya type II in E.coli (strain MG1655) confers resistance to phages SECphi7 and T7. While most T7 infected Zorya-containing cells undergo abortive infection, a minority produce viable phage progeny. These eventually accumulate to a high multiplicity of infection, leading to culture collapse by 170 minutes after initial infection. ZorA and ZorB probably assemble in the cell inner membrane and exert their effect there. In Escherichia coli (strain ATCC 8739 / DSM 1576 / NBRC 3972 / NCIMB 8545 / WDCM 00012 / Crooks), this protein is Zorya protein ZorB.